A 358-amino-acid polypeptide reads, in one-letter code: Valine dehydrogenase (358 aa).

The active site involves Lys-88. 188 to 194 (GVGKVGH) is an NAD(+) binding site.

Belongs to the Glu/Leu/Phe/Val dehydrogenases family. Homodimer.

It is found in the cytoplasm. It carries out the reaction L-valine + NAD(+) + H2O = 3-methyl-2-oxobutanoate + NH4(+) + NADH + H(+). It participates in amino-acid degradation; L-valine degradation. Oxidative deamination of branched-chain amino acids. The catabolism of valine is the major source of fatty acid precursors for macrolide biosynthesis and a vital source of antibiotic precursors. This chain is Valine dehydrogenase (vdh), found in Streptomyces virginiae (Streptomyces cinnamonensis).